The sequence spans 128 residues: KRAB domain-containing protein 1 (128 aa).

The region spanning 15–86 is the KRAB domain; that stretch reads VAFEDVAVYF…QPQGVLSRND (72 aa).

The protein is KRAB domain-containing protein 1 (KRBOX1) of Homo sapiens (Human).